A 408-amino-acid chain; its full sequence is Sporulation integral membrane protein YlbJ (408 aa).

Helical transmembrane passes span 6 to 26 (INTLLIASFFLFLTATVISHP), 43 to 63 (VVFPSLLPFFILSELLIGFGI), 81 to 101 (VPGVGGFVLAMGMASGNPAGA), 131 to 151 (LFIFGAVAVGFFQNASLGILL), 214 to 234 (VTSSVQTLLMVGGFIILFSVF), 294 to 314 (IIVSFILGFSGFSVQAQVAGI), 324 to 344 (PFFIARLLQGVYAAVFVMLLW), and 377 to 397 (LLVQIGPAVTLCALFTYIIIF).

The protein resides in the cell membrane. Required for spore cortex formation. The protein is Sporulation integral membrane protein YlbJ (ylbJ) of Bacillus subtilis (strain 168).